The following is a 371-amino-acid chain: MVLDPRDSLLSSYDYPLDPERIAQLPVEPRHSARLLIVQPLGMKPPIARHAEVWDWQEELRAGDLLVINDTRVLKARLRVRRSGGGLAELLVLEPRGEGCWLCLGRPAKRLRPGDQLWLEALGEEPIALQVISKDSASGGRVVQFPSHYANAEQLELLLERYGEVPLPPYIQRHDPSDSERYQTRYASRPGAVAAPTAGLHLSDELLEALKQRGVMLTSVTLHVGLGTFRPVETEDLSHLQLHSEWVEVRDDVVEAVMACRARAGRVIAVGTTSVRALEGAALAGGGFLQSFCGPVDLVIQPGYRFAVVDGLLTNFHLPKSSLLLLVSAMVGRERLLALYAEAIEHQYRFFSYGDAMWIDPEAVLPAARPC.

The protein belongs to the QueA family. In terms of assembly, monomer.

Its subcellular location is the cytoplasm. The enzyme catalyses 7-aminomethyl-7-carbaguanosine(34) in tRNA + S-adenosyl-L-methionine = epoxyqueuosine(34) in tRNA + adenine + L-methionine + 2 H(+). It participates in tRNA modification; tRNA-queuosine biosynthesis. Transfers and isomerizes the ribose moiety from AdoMet to the 7-aminomethyl group of 7-deazaguanine (preQ1-tRNA) to give epoxyqueuosine (oQ-tRNA). The sequence is that of S-adenosylmethionine:tRNA ribosyltransferase-isomerase from Prochlorococcus marinus (strain MIT 9313).